An 831-amino-acid polypeptide reads, in one-letter code: Cysteine--tRNA ligase, cytoplasmic (831 aa).

A2 is subject to N-acetylalanine. At S102 the chain carries Phosphoserine. Position 138 (C138) interacts with Zn(2+). G139 provides a ligand contact to L-cysteine. Positions 140-150 match the 'HIGH' region motif; that stretch reads PTVYDASHMGH. Position 179 (T179) interacts with L-cysteine. The 'KIIK' region motif lies at 184 to 187; the sequence is KIIR. Phosphoserine occurs at positions 388 and 390. Zn(2+)-binding residues include C431, H456, and E460. An L-cysteine-binding site is contributed by H456. A 'KMSKS' region motif is present at residues 489–493; the sequence is KMSKS. Residue K492 participates in ATP binding. Basic and acidic residues predominate over residues 736 to 762; it reads GKKRAEEEKRRKKEEAARKKQEQEAAK. Residues 736 to 766 form a disordered region; sequence GKKRAEEEKRRKKEEAARKKQEQEAAKLAKM. S829 carries the phosphoserine modification.

It belongs to the class-I aminoacyl-tRNA synthetase family. Homodimer. The cofactor is Zn(2+).

The protein localises to the cytoplasm. It carries out the reaction tRNA(Cys) + L-cysteine + ATP = L-cysteinyl-tRNA(Cys) + AMP + diphosphate. In terms of biological role, catalyzes the ATP-dependent ligation of cysteine to tRNA(Cys). In Mus musculus (Mouse), this protein is Cysteine--tRNA ligase, cytoplasmic (Cars1).